Consider the following 419-residue polypeptide: Adenylosuccinate synthetase (419 aa).

Residues 12–18 (GDEGKGK) and 40–42 (GHT) each bind GTP. Residue Asp-13 is the Proton acceptor of the active site. The Mg(2+) site is built by Asp-13 and Gly-40. Residues 13–16 (DEGK), 38–41 (NAGH), Thr-128, Arg-142, Gln-220, Thr-235, and Arg-299 contribute to the IMP site. His-41 acts as the Proton donor in catalysis. 295 to 301 (SITKRPR) is a binding site for substrate. Residues Arg-301, 327 to 329 (KSD), and 407 to 409 (SLG) each bind GTP.

Belongs to the adenylosuccinate synthetase family. As to quaternary structure, homodimer. Requires Mg(2+) as cofactor.

The protein localises to the cytoplasm. The enzyme catalyses IMP + L-aspartate + GTP = N(6)-(1,2-dicarboxyethyl)-AMP + GDP + phosphate + 2 H(+). The protein operates within purine metabolism; AMP biosynthesis via de novo pathway; AMP from IMP: step 1/2. Functionally, plays an important role in the de novo pathway of purine nucleotide biosynthesis. Catalyzes the first committed step in the biosynthesis of AMP from IMP. This Azobacteroides pseudotrichonymphae genomovar. CFP2 protein is Adenylosuccinate synthetase.